The following is a 78-amino-acid chain: Protein Class8-like (78 aa).

An N-terminal signal peptide occupies residues 1 to 19; sequence MRTLVVLLIGAVLLCSANA. The propeptide occupies 20-36; sequence FLDELLAESVNDMTDKR. A ShKT domain is found at 38 to 78; it reads CFDKYKSNICGGVISPAHCVRRSGRMAKFAKENCAHFCGFC. 3 cysteine pairs are disulfide-bonded: C38-C78, C47-C71, and C56-C75.

In terms of tissue distribution, expressed in ganglion neurons residing in the mesoglea (observed in both planulae and primary polyps). Not expressed in nematocytes.

In terms of biological role, probable neuropeptide. The protein is Protein Class8-like of Nematostella vectensis (Starlet sea anemone).